We begin with the raw amino-acid sequence, 2592 residues long: 6-hydroxymellein synthase cdmE (2592 aa).

Residues 1 to 11 (MVLHPSDRRFP) show a composition bias toward basic and acidic residues. The disordered stretch occupies residues 1 to 25 (MVLHPSDRRFPETNGVGGHSKDSSA). The Ketosynthase family 3 (KS3) domain occupies 32 to 456 (LEPLAIVGFA…GTNAHVVLES (425 aa)). Catalysis depends on for beta-ketoacyl synthase activity residues Cys-205, His-340, and His-379. Residues 589–910 (VFTGQGAQWP…RYSHTITRKK (322 aa)) are malonyl-CoA:ACP transacylase (MAT) domain. An N-terminal hotdog fold region spans residues 978–1113 (HELLGSPDPD…GFIESKCESD (136 aa)). The tract at residues 978–1291 (HELLGSPDPD…IRGTELCLLS (314 aa)) is dehydratase (DH) domain. A PKS/mFAS DH domain is found at 978 to 1296 (HELLGSPDPD…LCLLSAGRGD (319 aa)). The interval 1140–1296 (TQIGSISAFY…LCLLSAGRGD (157 aa)) is C-terminal hotdog fold. S-adenosyl-L-methionine contacts are provided by Ile-1462 and Glu-1484. Residues 1483–1591 (LEIGTGFGSV…HSLLKPGGKL (109 aa)) are methyltransferase (CMeT) domain. An enoyl reductase (ER) domain region spans residues 1887–2199 (GLLVWSDDEA…NDSNMDTAVI (313 aa)). The tract at residues 2223–2398 (ATYVIAGGLG…IPGMSVNLGN (176 aa)) is ketoreductase (KR) domain. The Carrier domain occupies 2509 to 2586 (VAASHVTEAI…GLSEKIARQS (78 aa)). Ser-2546 is modified (O-(pantetheine 4'-phosphoryl)serine).

The catalysed reaction is 5 malonyl-CoA + AH2 + 5 H(+) = 6-hydroxymellein + A + 5 CO2 + 5 CoA + H2O. Its pathway is secondary metabolite biosynthesis; terpenoid biosynthesis. Its function is as follows. Highly reducing polyketide synthase; part of the gene cluster that mediates the biosynthesis of chrodrimanin B, a meroterpenoid that acts as a potent blocker of insect GABA-gated chloride channels. The first step of the pathway is the biosynthesis of 6-hydroxymellein by the polyketide synthase cdmE. The prenyltransferase cdmH acts as a 6-hydroxymellein 5-farnesyltransferase and produces the hydrophobic metabolite verruculide C. The FAD-dependent monooxygenase cdmI further converts verruculide C into verruculide B. The terpene cyclase cdmG then produced the pentacyclic molecule 3-hydroxypentacecilide A, the backbone structure of chrodrimanin B, via folding the farnesyl moiety of the substrate into the chair-boat conformation. The short-chain dehydrogenase/reductase cdmF functions as the 3-OH dehydrogenase that oxidizes the C-3 hydroxyl group of 3-hydroxypentacecilide A and produces chrodrimanin C, the dehydrogenated product of 3-hydroxypentacecilide A. The cytochrome P450 monooxygenase cdmJ then accepts both 3-hydroxypentacecilide A and chrodrimanin C and functions as a C-7-beta-hydroxylase to produce respectively chrodrimanin H and chrodrimanin F. The dioxygenase cdmA accepts chrodrimanin H to afford chrodrimanin E, which is further transformed to chrodrimanin A by the dioxygenase cdmD. CdmA can also accept chrodrimanin C as substrate to convert it into verruculide A, which is further converted into chrodrimanin T by cdmD. The last step of the biosynthesis is proposed to be performed by the acetyltransferase cdmC which acetylates chrodrimanin A to yield chrodrimanin B. The pathway may also lead to the production of additional shunt products, including chrodrimanins T and U. This chain is 6-hydroxymellein synthase cdmE, found in Talaromyces verruculosus (Penicillium verruculosum).